Consider the following 146-residue polypeptide: Hemoglobin subunit beta (146 aa).

The Globin domain maps to 2–146; it reads EWTDFERATI…VVNSLGRQYH (145 aa). Heme b-binding residues include His63 and His92.

The protein belongs to the globin family. Heterotetramer of two alpha chains and two beta chains. Can form polymers. In terms of tissue distribution, red blood cells.

In terms of biological role, involved in oxygen transport from gills to the various peripheral tissues. This is Hemoglobin subunit beta (hbb) from Chelidonichthys kumu (Bluefin gurnard).